We begin with the raw amino-acid sequence, 60 residues long: Large ribosomal subunit protein uL30 (60 aa).

The protein belongs to the universal ribosomal protein uL30 family. In terms of assembly, part of the 50S ribosomal subunit.

In Finegoldia magna (strain ATCC 29328 / DSM 20472 / WAL 2508) (Peptostreptococcus magnus), this protein is Large ribosomal subunit protein uL30.